Reading from the N-terminus, the 116-residue chain is Hydrogenase maturation factor HypA (116 aa).

Histidine 2 is a Ni(2+) binding site. 4 residues coordinate Zn(2+): cysteine 73, cysteine 76, cysteine 90, and cysteine 93.

This sequence belongs to the HypA/HybF family.

Functionally, involved in the maturation of [NiFe] hydrogenases. Required for nickel insertion into the metal center of the hydrogenase. This chain is Hydrogenase maturation factor HypA, found in Escherichia coli O6:H1 (strain CFT073 / ATCC 700928 / UPEC).